A 785-amino-acid polypeptide reads, in one-letter code: MSVKEHNEEDIIGDELQNSRQLSIDCDSVKISLRNTYWTKDYTTGIKLFIKHMKRENDLLIKDIKFYNDFVNKFWKPTLNNLQKMEATNSMNSRLLEVMSKQFNIISTEQVERDCKIPLQELRDLNESFLREAENDLSSRYSAYIKDLVAAKEALIGCEKRVQSIYKLKKANTPVENSSSVFDNGKDSAPLTRLNFVCEFPYTLDERLKFEDCDQFMSFLQTLKGKVILEKSVFSVPGLSNQSFQGRSLIKELKKLEPRLNLSLFNIDRIGNEFIQLGIIQEYSLSFYSSKVSQFDQEKYYYWNSEVLATQESNGNAGNRKKKSYGELTHSDNEHEEKSNVSSIKTSISDWIRKVSQHDNDDCDAAGSTDMNKNEWKSLKQQLESSQDIFFSKCCQLEYSKVQLEKTIYDYCKNYSKMEDGIKRALESSNMMFQQKCEKFTDSPVCSLQEAQLPQETANADVRGFFLRDNGIPFRRWNILEASDPVDACKEISIKSEKFFCGSEINNELAALDTLGAIKIILRQIEKEPNANKVIQSWHRDIDFVRVSNLKRDLLGEFKGSKTTENTNSIITAHFFENSHSYVTNDLVGLIKLWLLELPDSLIPSNHYDDLIKAEKSLTSLCEQFPTSSLRFLQELANHFQLINSKYSLPPQTIQDLFRDNSDIDIPLAHHFVRRTGLQNPIDIKILSPTLSTFFINERTVETLQTLIANRITTATTATLTEPPTIIIKDTTAPIHSTPKPPPNDKDGHFIPRPFKTSSTPTTPERPKRKSGLFLPINVNDVPST.

Ser2 bears the N-acetylserine mark. Residues 31 to 463 (ISLRNTYWTK…PQETANADVR (433 aa)) enclose the F-BAR domain. Residues 313 to 340 (SNGNAGNRKKKSYGELTHSDNEHEEKSN) form a disordered region. The segment covering 329 to 339 (THSDNEHEEKS) has biased composition (basic and acidic residues). The Rho-GAP domain occupies 520 to 702 (IILRQIEKEP…TFFINERTVE (183 aa)). Residues 732–785 (TAPIHSTPKPPPNDKDGHFIPRPFKTSSTPTTPERPKRKSGLFLPINVNDVPST) are disordered. Ser759 is subject to Phosphoserine. Phosphothreonine occurs at positions 760, 762, and 763.

Phosphorylation at the C-terminus negatively regulates the activity and the polarized localization.

The protein localises to the cytoplasmic vesicle membrane. It localises to the cell membrane. It is found in the bud tip. The protein resides in the bud neck. In terms of biological role, GTPase activating protein (GAP) for RHO3 and CDC42 that binds membranes through phosphatidylinositol 4,5-bisphosphate. Plays a key role in cell polarity. Modulates the RHO3 distribution at the plasma membrane and its polarity during growth. The polypeptide is Rho-GTPase-activating protein RGD3 (Saccharomyces cerevisiae (strain ATCC 204508 / S288c) (Baker's yeast)).